The sequence spans 338 residues: Aspartate carbamoyltransferase catalytic subunit (338 aa).

Positions 59 and 60 each coordinate carbamoyl phosphate. K87 is a binding site for L-aspartate. R109, H142, and Q145 together coordinate carbamoyl phosphate. Residues R182 and R248 each contribute to the L-aspartate site. Residues G289 and P290 each coordinate carbamoyl phosphate.

Belongs to the aspartate/ornithine carbamoyltransferase superfamily. ATCase family. Heterododecamer (2C3:3R2) of six catalytic PyrB chains organized as two trimers (C3), and six regulatory PyrI chains organized as three dimers (R2).

The catalysed reaction is carbamoyl phosphate + L-aspartate = N-carbamoyl-L-aspartate + phosphate + H(+). It functions in the pathway pyrimidine metabolism; UMP biosynthesis via de novo pathway; (S)-dihydroorotate from bicarbonate: step 2/3. Functionally, catalyzes the condensation of carbamoyl phosphate and aspartate to form carbamoyl aspartate and inorganic phosphate, the committed step in the de novo pyrimidine nucleotide biosynthesis pathway. The sequence is that of Aspartate carbamoyltransferase catalytic subunit from Synechococcus elongatus (strain ATCC 33912 / PCC 7942 / FACHB-805) (Anacystis nidulans R2).